The sequence spans 792 residues: Endonuclease MutS2 (792 aa).

334-341 (GPNTGGKT) provides a ligand contact to ATP. Residues 717–792 (INLIGKTTDE…DAGVTIATFK (76 aa)) form the Smr domain.

The protein belongs to the DNA mismatch repair MutS family. MutS2 subfamily. In terms of assembly, homodimer. Binds to stalled ribosomes, contacting rRNA.

Endonuclease that is involved in the suppression of homologous recombination and thus may have a key role in the control of bacterial genetic diversity. In terms of biological role, acts as a ribosome collision sensor, splitting the ribosome into its 2 subunits. Detects stalled/collided 70S ribosomes which it binds and splits by an ATP-hydrolysis driven conformational change. Acts upstream of the ribosome quality control system (RQC), a ribosome-associated complex that mediates the extraction of incompletely synthesized nascent chains from stalled ribosomes and their subsequent degradation. Probably generates substrates for RQC. The sequence is that of Endonuclease MutS2 from Agathobacter rectalis (strain ATCC 33656 / DSM 3377 / JCM 17463 / KCTC 5835 / VPI 0990) (Eubacterium rectale).